A 513-amino-acid polypeptide reads, in one-letter code: MDMLNLTLKPGCLSLNQLRQVSRSPINLSLDASAIPAIEESTQVVERVIAEDRTVYGINTGFGLLANTRIAPEDLETLQRSIVLSHAAGIGEFMADETVRLMMVLKINSLSRGYSGIRLNVIQMLIDLVNAQVYPCVPQKGSVGASGDLAPLAHMSTVLLGEGQARHNGKIISGLEALKIAGLEPITLAPKEGLALLNGTQASTAFALEGLFIAEDLFASATVCGAMSVEAALGSRRPFDPRIHRVRGHRSQMDSAMAYRHLLDTSSEIGQSHSNCEKVQDPYSLRCQPQVMGACLQQIRNSAEILLVESNSVSDNPLVFAEDDDIISGGNFHAEPVAMAADNLALAIAEIGSLSERRMALLIDSALSKLPPFLVDNGGVNSGFMIAQVTSAALASENKTLAHPASVDSLPTSANQEDHVSMATFAARRLREMGENTRGILAVEYLSAAQGLDFRAPHKSSPRIEQAKQMLREKVSFYDKDRYFAPDIEKANSLLKLAMHNVLMPEALLPSVL.

A cross-link (5-imidazolinone (Ala-Gly)) is located at residues 145–147 (ASG). At S146 the chain carries 2,3-didehydroalanine (Ser).

It belongs to the PAL/histidase family. Contains an active site 4-methylidene-imidazol-5-one (MIO), which is formed autocatalytically by cyclization and dehydration of residues Ala-Ser-Gly.

The protein resides in the cytoplasm. The enzyme catalyses L-histidine = trans-urocanate + NH4(+). The protein operates within amino-acid degradation; L-histidine degradation into L-glutamate; N-formimidoyl-L-glutamate from L-histidine: step 1/3. This chain is Histidine ammonia-lyase, found in Vibrio vulnificus (strain CMCP6).